Reading from the N-terminus, the 359-residue chain is 3-dehydroquinate synthase (359 aa).

Residues Asp71 to Lys76, Gly105 to Asp109, Thr129 to Thr130, Lys142, Lys151, and Cys169 to Thr172 contribute to the NAD(+) site. Zn(2+)-binding residues include Glu184, His247, and His264.

Belongs to the sugar phosphate cyclases superfamily. Dehydroquinate synthase family. It depends on NAD(+) as a cofactor. Co(2+) serves as cofactor. The cofactor is Zn(2+).

The protein localises to the cytoplasm. It catalyses the reaction 7-phospho-2-dehydro-3-deoxy-D-arabino-heptonate = 3-dehydroquinate + phosphate. Its pathway is metabolic intermediate biosynthesis; chorismate biosynthesis; chorismate from D-erythrose 4-phosphate and phosphoenolpyruvate: step 2/7. In terms of biological role, catalyzes the conversion of 3-deoxy-D-arabino-heptulosonate 7-phosphate (DAHP) to dehydroquinate (DHQ). The protein is 3-dehydroquinate synthase of Shewanella oneidensis (strain ATCC 700550 / JCM 31522 / CIP 106686 / LMG 19005 / NCIMB 14063 / MR-1).